A 1036-amino-acid chain; its full sequence is PDZ domain-containing RING finger protein 4 (1036 aa).

Residues 18-56 form an RING-type; degenerate zinc finger; sequence CKLCGQVLEEPLCTPCGHVFCASCLLPWAVRRRRCPLQC. The segment covering 129-160 has biased composition (gly residues); that stretch reads ARGGCGPTPRAGRGGGARGGPPGGRWGRGRGP. The segment at 129 to 161 is disordered; that stretch reads ARGGCGPTPRAGRGGGARGGPPGGRWGRGRGPG. PDZ domains follow at residues 224-314 and 402-486; these read TIVL…LRRT and EVEL…VARP. Residues 515–590 are disordered; it reads HNEAMQPTAN…SLKSKRDLGQ (76 aa). Over residues 548 to 566 the composition is skewed to basic and acidic residues; that stretch reads NHEKDSGVGRTDESLRNDE. Residues 655–689 are a coiled coil; the sequence is NQGEQEGVEHELQLLNEELRNIELECQNIMQAHRL. Basic and acidic residues predominate over residues 726-735; sequence EHPEKSDKDS. Positions 726 to 819 are disordered; that stretch reads EHPEKSDKDS…VLEGSKLPDQ (94 aa). A compositionally biased stretch (polar residues) spans 736-750; sequence SSAYNTAESCRSTPL. Residues 774 to 799 show a composition bias toward low complexity; the sequence is STMAATQSSSGQSSKESTSTKAKTTE. Residues 805-819 are compositionally biased toward basic and acidic residues; sequence ESKEKVLEGSKLPDQ.

This chain is PDZ domain-containing RING finger protein 4 (PDZRN4), found in Homo sapiens (Human).